The primary structure comprises 342 residues: Heparan sulfate glucosamine 3-O-sulfotransferase 6 (342 aa).

Residues 1–21 (MAGSGGLGGGAGGGQGAGAGQ) form a disordered region. Over 1–31 (MAGSGGLGGGAGGGQGAGAGQGAALRASRAP) the chain is Cytoplasmic. A helical; Signal-anchor for type II membrane protein membrane pass occupies residues 32–49 (MLLVALVLGAYCLCALPG). The Lumenal portion of the chain corresponds to 50–342 (RCPPAARAPA…QMTGQDFGWG (293 aa)). A disordered region spans residues 55–85 (ARAPAPAPAPSEPSSSVHRPGAPGLPLASGP). The segment covering 66 to 85 (EPSSSVHRPGAPGLPLASGP) has biased composition (low complexity). 100 to 104 (KGGTR) contacts 3'-phosphoadenylyl sulfate. Residues 122–128 (EPHFFDR) and 153–156 (KTPS) each bind substrate. Residues arginine 181 and serine 189 each coordinate 3'-phosphoadenylyl sulfate. 220-221 (WS) is a substrate binding site. Residue asparagine 281 is glycosylated (N-linked (GlcNAc...) asparagine). A disulfide bridge links cysteine 288 with cysteine 300. 305 to 309 (KGRPH) lines the 3'-phosphoadenylyl sulfate pocket.

The protein belongs to the sulfotransferase 1 family.

The protein resides in the golgi apparatus membrane. It carries out the reaction alpha-D-glucosaminyl-[heparan sulfate](n) + 3'-phosphoadenylyl sulfate = 3-sulfo-alpha-D-glucosaminyl-[heparan sulfate](n) + adenosine 3',5'-bisphosphate + H(+). Sulfotransferase that utilizes 3'-phospho-5'-adenylyl sulfate (PAPS) to catalyze the transfer of a sulfo group to heparan sulfate. The substrate-specific O-sulfation generates an enzyme-modified heparan sulfate which acts as a binding receptor to Herpes Simplex Virus-1 (HSV-1) and permits its entry. Unlike 3-OST-1, does not convert non-anticoagulant heparan sulfate to anticoagulant heparan sulfate. The chain is Heparan sulfate glucosamine 3-O-sulfotransferase 6 (HS3ST6) from Homo sapiens (Human).